Consider the following 224-residue polypeptide: Late embryogenesis abundant protein, group 3 (224 aa).

Disordered stretches follow at residues 1–169 and 193–224; these read MASN…KDKT and NTLG…TRNH. The segment covering 13–23 has biased composition (basic and acidic residues); sequence GETKARNEEKT. A run of 5 repeats spans residues 26 to 36, 37 to 47, 48 to 58, 59 to 69, and 70 to 80. The 12 X 11 AA tandem repeats stretch occupies residues 26–153; the sequence is VMGATKDKAG…TEAAKQKASE (128 aa). Basic and acidic residues-rich tracts occupy residues 41 to 85, 92 to 109, and 120 to 151; these read TKQK…KDKT, AKEK…RAAQ, and EKTE…KQKA. The 6; truncated repeat unit spans residues 81 to 87; that stretch reads AKDKTAQ. Repeat copies occupy residues 88–98, 99–109, 121–131, 132–142, and 143–153. Residues 200-224 are compositionally biased toward low complexity; it reads DNTITTKDNTTGATTKDTTTTTRNH.

This sequence belongs to the LEA type 4 family.

The sequence is that of Late embryogenesis abundant protein, group 3 from Triticum aestivum (Wheat).